The chain runs to 416 residues: Isocitrate dehydrogenase [NADP] (416 aa).

Residues 77–79 and R84 contribute to the NADP(+) site; that span reads TIT. T79 lines the substrate pocket. Substrate contacts are provided by residues 96 to 102, R111, and R134; that span reads SPNGTIR. D254 is a binding site for Mn(2+). K262 provides a ligand contact to NADP(+). D277 contributes to the Mn(2+) binding site. NADP(+) contacts are provided by residues 312–317 and N330; that span reads GTVTRH.

Belongs to the isocitrate and isopropylmalate dehydrogenases family. As to quaternary structure, heterodimer. The cofactor is Mg(2+). Mn(2+) is required as a cofactor.

It localises to the cytoplasm. It carries out the reaction D-threo-isocitrate + NADP(+) = 2-oxoglutarate + CO2 + NADPH. Functionally, may supply 2-oxoglutarate for amino acid biosynthesis and ammonia assimilation via the glutamine synthetase/glutamate synthase (GS/GOGAT) pathway. This is Isocitrate dehydrogenase [NADP] (ICDH-1) from Solanum tuberosum (Potato).